Consider the following 124-residue polypeptide: Large ribosomal subunit protein bL19 (124 aa).

The protein belongs to the bacterial ribosomal protein bL19 family.

In terms of biological role, this protein is located at the 30S-50S ribosomal subunit interface and may play a role in the structure and function of the aminoacyl-tRNA binding site. In Dinoroseobacter shibae (strain DSM 16493 / NCIMB 14021 / DFL 12), this protein is Large ribosomal subunit protein bL19.